The primary structure comprises 407 residues: UPF0597 protein NAMH_0191 (407 aa).

The protein belongs to the UPF0597 family.

In Nautilia profundicola (strain ATCC BAA-1463 / DSM 18972 / AmH), this protein is UPF0597 protein NAMH_0191.